The following is an 892-amino-acid chain: MTQYTPMIQQYLKVKADYQDAFLFFRLGDFYEMFFEDAVKAAHELEITLTSRDGGSSERIPMCGVPYHAAKNYIEQLVEKGYKVAVCEQVEDPKTAKGVVRREVVQLITPGTMMEGRTIDEKENNFLAALTHFEDGSYALACNDLTTGQNTVTLLTGSVEDILLEVYATGSKEIVVDSSFSKDELNKLTETLKMTISYEDATAIPEGLEHLVKNVSQAKLIKAVGRLFNYVIRTQKRSLDHLQPVEIYYTNQFMKIDVHSKRNLELTETLRTKEKTGSLLWLLDKTKTAMGGRMLKQWMERPLIQKERIEERLEMVETFVNDYFLREDLKEKLKEVYDLERLAGKVAFGNVNARDLLQLRRSLLQVPAILEAISLLDNAYAARLIQGADPCESLTELLGRSIQENPPLSIKDGDIIKDGYNDKLDQYRYVSKNGKTWIAELEKRERDITGIKSLKIGYNRIFGYYIEVTKANLGALPEGRYERKQTLANAERFITDELKEKETLILEAEEKIVQLEYDLFTALREEVKVFIPKLQHLAKVISELDVLQSFATVSEEEQFVKPVLTTKREIFIKDGRHPVVEKVLNGKLYVPNDCIMPENMDVFLITGPNMSGKSTYMRQLALVTVMSQIGCFVPATEAVLPVFDQIFTRIGAADDLISGQSTFMVEMLEAKNAIANASERSLILFDEIGRGTSTYDGMALAQAIIEHIHDQIGAKTLFSTHYHELTVLEDSLDQLKNVHVSAIEENGKVVFLHKIQDGAADKSYGIHVAQLAELPDSLIARAKEVLAQLEGQEEIVIPKRVEVKAQEQEVIPEPIVVKEEPIEIEETKVDNEEESQLSFFGAEQSSKKQAKPALDAKETAVLTQIKKIDLLDMTPLEAMNELYRLQKKLKKG.

An ATP-binding site is contributed by 607–614 (GPNMSGKS).

The protein belongs to the DNA mismatch repair MutS family.

In terms of biological role, this protein is involved in the repair of mismatches in DNA. It is possible that it carries out the mismatch recognition step. This protein has a weak ATPase activity. The sequence is that of DNA mismatch repair protein MutS from Bacillus cereus (strain AH820).